We begin with the raw amino-acid sequence, 142 residues long: Large ribosomal subunit protein uL11 (142 aa).

It belongs to the universal ribosomal protein uL11 family. Part of the ribosomal stalk of the 50S ribosomal subunit. Interacts with L10 and the large rRNA to form the base of the stalk. L10 forms an elongated spine to which L12 dimers bind in a sequential fashion forming a multimeric L10(L12)X complex. Post-translationally, one or more lysine residues are methylated.

Forms part of the ribosomal stalk which helps the ribosome interact with GTP-bound translation factors. This is Large ribosomal subunit protein uL11 from Xylella fastidiosa (strain Temecula1 / ATCC 700964).